The sequence spans 99 residues: MSFVITNPEALTVAATEVRRIRDRAIQSDAQVAPMTTAVRPPAADLVSEKAATFLVEYARKYRQTIAAAAVVLEEFAHALTTGADKYATAEADNIKTFS.

The 92-residue stretch at 1 to 92 folds into the PE domain; sequence MSFVITNPEA…GADKYATAEA (92 aa). Ser-2 is modified (N-acetylserine).

This sequence belongs to the mycobacterial PE family. In terms of assembly, forms a heterodimer with PPE41. The dimer forms a 1:1:1 heterotrimeric complex with EspG5. Interacts with PPE51.

Its subcellular location is the secreted. Its function is as follows. The PE25/PPE41 dimer induces both a strong humoral and cellular immune response. PE25 protein alone induces low response. The dimer induces necrosis, but not apoptosis, in mouse macrophage cells. It also induces activation and maturation of mouse dendritic cells and drives Th2-biased immune responses. The chain is PE-PGRS family protein PE25 from Mycobacterium tuberculosis (strain ATCC 25618 / H37Rv).